The sequence spans 236 residues: Small ribosomal subunit protein uS2c (236 aa).

It belongs to the universal ribosomal protein uS2 family.

It localises to the plastid. It is found in the chloroplast. The protein is Small ribosomal subunit protein uS2c (rps2) of Olimarabidopsis pumila (Dwarf rocket).